We begin with the raw amino-acid sequence, 414 residues long: Putative polyketide beta-ketoacyl synthase 2 (414 aa).

The Ketosynthase family 3 (KS3) domain occupies 4–407 (PRRAVVTGLG…GNNSALVLRR (404 aa)).

Belongs to the thiolase-like superfamily. Beta-ketoacyl-ACP synthases family.

In terms of biological role, involved in developmentally regulated synthesis of a compound biosynthetically related to polyketide antibiotics which is essential for spore color in Streptomyces halstedii. This chain is Putative polyketide beta-ketoacyl synthase 2 (sch2), found in Streptomyces halstedii.